The primary structure comprises 479 residues: Serine carboxypeptidase-like 29 (479 aa).

Residues 1 to 28 form the signal peptide; that stretch reads MAKTRGSCCLVNALIAIAFLATAHLCEA. N-linked (GlcNAc...) asparagine glycosylation is found at Asn47 and Asn144. 3 cysteine pairs are disulfide-bonded: Cys93–Cys349, Cys254–Cys266, and Cys290–Cys317. Ser186 is an active-site residue. A glycan (N-linked (GlcNAc...) asparagine) is linked at Asn293. Catalysis depends on residues Asp386 and His438.

Belongs to the peptidase S10 family. Expressed in seedlings, roots, leaves and flowers.

The protein resides in the secreted. In terms of biological role, probable carboxypeptidase. In Arabidopsis thaliana (Mouse-ear cress), this protein is Serine carboxypeptidase-like 29 (SCPL29).